The sequence spans 249 residues: Proteasome subunit alpha 2 (249 aa).

At methionine 1 the chain carries N-acetylmethionine.

This sequence belongs to the peptidase T1A family. In terms of assembly, the 20S proteasome core is composed of 14 alpha and 14 beta subunits that assemble into four stacked heptameric rings, resulting in a barrel-shaped structure. The two inner rings, each composed of seven catalytic beta subunits, are sandwiched by two outer rings, each composed of seven alpha subunits. H.volcanii produces at least 2 types of 20S proteasomes: an alpha1-beta proteasome and a proteasome containing all three subunits (alpha1, alpha2, and beta) that appears to be asymmetrical with homo-oligomeric alpha1 and alpha2 rings positioned on separate ends. The catalytic chamber with the active sites is on the inside of the barrel. Has probably a gated structure, the ends of the cylinder being occluded by the N-termini of the alpha-subunits. Is likely capped at one or both ends by the proteasome regulatory ATPase, PAN.

It is found in the cytoplasm. With respect to regulation, the formation of the proteasomal ATPase PAN-20S proteasome complex, via the docking of the C-termini of PAN into the intersubunit pockets in the alpha-rings, triggers opening of the gate for substrate entry. Interconversion between the open-gate and close-gate conformations leads to a dynamic regulation of the 20S proteasome proteolysis activity. Component of the proteasome core, a large protease complex with broad specificity involved in protein degradation. The H.volcanii alpha1-beta-alpha2 proteasome is able to cleave oligopeptides after Tyr and thus displays chymotrypsin-like activity. In Haloferax volcanii (strain ATCC 29605 / DSM 3757 / JCM 8879 / NBRC 14742 / NCIMB 2012 / VKM B-1768 / DS2) (Halobacterium volcanii), this protein is Proteasome subunit alpha 2.